A 394-amino-acid chain; its full sequence is Phosphopentomutase (394 aa).

Residues Asp14, Asp287, His292, Asp328, His329, and His340 each contribute to the Mn(2+) site.

Belongs to the phosphopentomutase family. Mn(2+) is required as a cofactor.

It is found in the cytoplasm. It catalyses the reaction 2-deoxy-alpha-D-ribose 1-phosphate = 2-deoxy-D-ribose 5-phosphate. It carries out the reaction alpha-D-ribose 1-phosphate = D-ribose 5-phosphate. It participates in carbohydrate degradation; 2-deoxy-D-ribose 1-phosphate degradation; D-glyceraldehyde 3-phosphate and acetaldehyde from 2-deoxy-alpha-D-ribose 1-phosphate: step 1/2. Isomerase that catalyzes the conversion of deoxy-ribose 1-phosphate (dRib-1-P) and ribose 1-phosphate (Rib-1-P) to deoxy-ribose 5-phosphate (dRib-5-P) and ribose 5-phosphate (Rib-5-P), respectively. In Listeria welshimeri serovar 6b (strain ATCC 35897 / DSM 20650 / CCUG 15529 / CIP 8149 / NCTC 11857 / SLCC 5334 / V8), this protein is Phosphopentomutase.